A 138-amino-acid polypeptide reads, in one-letter code: Mediator of RNA polymerase II transcription subunit 21 (138 aa).

A coiled-coil region spans residues 87 to 128 (KHQLEKIKKLQNSIEEKQLERKSLESENEDLKLQLAKRIETF).

This sequence belongs to the Mediator complex subunit 21 family. As to quaternary structure, component of the Mediator complex.

It is found in the nucleus. Component of the Mediator complex, a coactivator involved in the regulated transcription of nearly all RNA polymerase II-dependent genes. Mediator functions as a bridge to convey information from gene-specific regulatory proteins to the basal RNA polymerase II transcription machinery. Mediator is recruited to promoters by direct interactions with regulatory proteins and serves as a scaffold for the assembly of a functional preinitiation complex with RNA polymerase II and the general transcription factors. In Schizosaccharomyces pombe (strain 972 / ATCC 24843) (Fission yeast), this protein is Mediator of RNA polymerase II transcription subunit 21 (med21).